Here is a 97-residue protein sequence, read N- to C-terminus: Small integral membrane protein 8 (97 aa).

The span at 1–14 shows a compositional bias: low complexity; sequence MSSPSSESSNAKSS. Residues 1–26 form a disordered region; sequence MSSPSSESSNAKSSPPKEEYRTPGLR. The chain crosses the membrane as a helical span at residues 49–69; sequence VMVFGIVTITMCVAYIAYLHA.

It belongs to the SMIM8 family.

Its subcellular location is the membrane. This chain is Small integral membrane protein 8 (smim8), found in Xenopus tropicalis (Western clawed frog).